Reading from the N-terminus, the 233-residue chain is Large ribosomal subunit protein eL6y (233 aa).

A compositionally biased stretch (basic and acidic residues) spans His-48–Lys-72. Residues His-48 to Pro-82 form a disordered region.

This sequence belongs to the eukaryotic ribosomal protein eL6 family.

In Arabidopsis thaliana (Mouse-ear cress), this protein is Large ribosomal subunit protein eL6y (RPL6B).